The sequence spans 260 residues: Carbonic anhydrase 2 (260 aa).

Ser-2 bears the N-acetylserine mark. Ser-2 carries the post-translational modification Phosphoserine. The Alpha-carbonic anhydrase domain maps to 3 to 259 (HHWGYSKHNG…LKNRKIKASF (257 aa)). His-64 (proton acceptor) is an active-site residue. Asn-67 is an active-site residue. Ser-87 carries the post-translational modification Phosphoserine. Zn(2+) contacts are provided by His-94, His-96, and His-119. Tyr-127 is an active-site residue. Ser-165 is modified (phosphoserine). 198 to 199 (TT) lines the substrate pocket.

Belongs to the alpha-carbonic anhydrase family. As to quaternary structure, interacts with SLC4A4. Interaction with SLC4A7 regulates SLC4A7 transporter activity. Interacts with SLC26A6. Requires Zn(2+) as cofactor.

It is found in the cytoplasm. The protein localises to the cell membrane. The catalysed reaction is hydrogencarbonate + H(+) = CO2 + H2O. It catalyses the reaction urea = cyanamide + H2O. With respect to regulation, inhibited by acetazolamide. Its function is as follows. Catalyzes the reversible hydration of carbon dioxide. Can also hydrate cyanamide to urea. Involved in the regulation of fluid secretion into the anterior chamber of the eye. Essential for bone resorption and osteoclast differentiation. Contributes to intracellular pH regulation in the duodenal upper villous epithelium during proton-coupled peptide absorption. Stimulates the chloride-bicarbonate exchange activity of SLC26A6. The chain is Carbonic anhydrase 2 (Ca2) from Mus musculus (Mouse).